The primary structure comprises 99 residues: Large ribosomal subunit protein uL23 (99 aa).

The protein belongs to the universal ribosomal protein uL23 family. As to quaternary structure, part of the 50S ribosomal subunit. Contacts protein L29, and trigger factor when it is bound to the ribosome.

In terms of biological role, one of the early assembly proteins it binds 23S rRNA. One of the proteins that surrounds the polypeptide exit tunnel on the outside of the ribosome. Forms the main docking site for trigger factor binding to the ribosome. The chain is Large ribosomal subunit protein uL23 from Magnetococcus marinus (strain ATCC BAA-1437 / JCM 17883 / MC-1).